Here is a 392-residue protein sequence, read N- to C-terminus: Zinc transporter zipt-7.1 (392 aa).

Asn63 carries an N-linked (GlcNAc...) asparagine glycan. A run of 2 helical transmembrane segments spans residues 82–102 and 114–134; these read VFSL…LFFI and ILLA…IIPH. Positions 139 to 162 are disordered; it reads HSHGAHDHDHAHSHDHAHNDHSHD. Basic and acidic residues predominate over residues 142-162; that stretch reads GAHDHDHAHSHDHAHNDHSHD. Residues 170 to 190 form a helical membrane-spanning segment; sequence GIYVIAGILVFMMVEQLVRII. Residue Asn248 is glycosylated (N-linked (GlcNAc...) asparagine). The next 3 membrane-spanning stretches (helical) occupy residues 255–275, 304–324, and 331–351; these read IGAS…TVLL, VTAL…NPVL, and GAIM…SVIP. Residue Asn361 is glycosylated (N-linked (GlcNAc...) asparagine). Residues 371–391 form a helical membrane-spanning segment; the sequence is SLVHLIAICMGVGMMYIVSLV.

It belongs to the ZIP transporter (TC 2.A.5) family. KE4/Catsup subfamily.

The protein resides in the membrane. Zinc transporter which regulates intracellular zinc levels. Required for spermatogenesis in both hermaphrodites and males where it resides in an inactive form in immature sperm, spermatids, but is likely activated in response to reduced spe-4 and spe-6 function. Upon activation, mediates the release of zinc from internal stores in spermatids into the cytoplasm. The resulting increase in cytoplasmic zinc levels promotes spermatid activation and subsequent differentiation into mature motile sperm that are capable of fertilization. The protein is Zinc transporter zipt-7.1 of Caenorhabditis briggsae.